The chain runs to 582 residues: Dihydroxy-acid dehydratase 3 (582 aa).

Residue Cys67 participates in [2Fe-2S] cluster binding. Asp99 lines the Mg(2+) pocket. Cys140 contacts [2Fe-2S] cluster. The Mg(2+) site is built by Asp141 and Lys142. Residue Lys142 is modified to N6-carboxylysine. Cys212 is a binding site for [2Fe-2S] cluster. A Mg(2+)-binding site is contributed by Glu462. The Proton acceptor role is filled by Ser488.

The protein belongs to the IlvD/Edd family. Homodimer. Requires [2Fe-2S] cluster as cofactor. It depends on Mg(2+) as a cofactor.

It carries out the reaction (2R)-2,3-dihydroxy-3-methylbutanoate = 3-methyl-2-oxobutanoate + H2O. The enzyme catalyses (2R,3R)-2,3-dihydroxy-3-methylpentanoate = (S)-3-methyl-2-oxopentanoate + H2O. It functions in the pathway amino-acid biosynthesis; L-isoleucine biosynthesis; L-isoleucine from 2-oxobutanoate: step 3/4. Its pathway is amino-acid biosynthesis; L-valine biosynthesis; L-valine from pyruvate: step 3/4. Functions in the biosynthesis of branched-chain amino acids. Catalyzes the dehydration of (2R,3R)-2,3-dihydroxy-3-methylpentanoate (2,3-dihydroxy-3-methylvalerate) into 2-oxo-3-methylpentanoate (2-oxo-3-methylvalerate) and of (2R)-2,3-dihydroxy-3-methylbutanoate (2,3-dihydroxyisovalerate) into 2-oxo-3-methylbutanoate (2-oxoisovalerate), the penultimate precursor to L-isoleucine and L-valine, respectively. In Bradyrhizobium diazoefficiens (strain JCM 10833 / BCRC 13528 / IAM 13628 / NBRC 14792 / USDA 110), this protein is Dihydroxy-acid dehydratase 3.